A 137-amino-acid polypeptide reads, in one-letter code: Nucleoside diphosphate kinase (137 aa).

Positions 9, 57, 85, 91, 102, and 112 each coordinate ATP. The active-site Pros-phosphohistidine intermediate is His-115.

Belongs to the NDK family. In terms of assembly, homotetramer. Requires Mg(2+) as cofactor.

The protein resides in the cytoplasm. It carries out the reaction a 2'-deoxyribonucleoside 5'-diphosphate + ATP = a 2'-deoxyribonucleoside 5'-triphosphate + ADP. The enzyme catalyses a ribonucleoside 5'-diphosphate + ATP = a ribonucleoside 5'-triphosphate + ADP. In terms of biological role, major role in the synthesis of nucleoside triphosphates other than ATP. The ATP gamma phosphate is transferred to the NDP beta phosphate via a ping-pong mechanism, using a phosphorylated active-site intermediate. The chain is Nucleoside diphosphate kinase from Syntrophotalea carbinolica (strain DSM 2380 / NBRC 103641 / GraBd1) (Pelobacter carbinolicus).